The chain runs to 20 residues: 44 kDa cell wall protein 2 (20 aa).

It is found in the secreted. It localises to the cell wall. This chain is 44 kDa cell wall protein 2, found in Solanum lycopersicum (Tomato).